Here is a 123-residue protein sequence, read N- to C-terminus: Large ribosomal subunit protein bL17 (123 aa).

This sequence belongs to the bacterial ribosomal protein bL17 family. Part of the 50S ribosomal subunit. Contacts protein L32.

This is Large ribosomal subunit protein bL17 from Exiguobacterium sibiricum (strain DSM 17290 / CCUG 55495 / CIP 109462 / JCM 13490 / 255-15).